A 247-amino-acid polypeptide reads, in one-letter code: 14-3-3 protein gamma (247 aa).

N-acetylmethionine; in 14-3-3 protein gamma; alternate; partial is present on methionine 1. Valine 2 is modified (N-acetylvaline; in 14-3-3 protein gamma, N-terminally processed; partial). N-acetylvaline; partial is present on valine 2. Positions 2-166 (VDREQLVQKA…AHEISKEHMQ (165 aa)) are required for interaction with SPATA18/MIEAP (isoform 2) but dispensable for binding to SPATA18/MIEAP (isoform 1). The segment at 2–247 (VDREQLVQKA…QDDDGGEGNN (246 aa)) is interaction with SPATA18/MIEAP. The residue at position 71 (serine 71) is a Phosphoserine. At tyrosine 133 the chain carries Phosphotyrosine. Threonine 145 carries the phosphothreonine modification. Serine 215 carries the post-translational modification Phosphoserine. Residue threonine 234 is modified to Phosphothreonine. Residue serine 235 is modified to Phosphoserine.

This sequence belongs to the 14-3-3 family. As to quaternary structure, homodimer. Part of a complex that contains DSG3, PKP1, YAP1 and YWHAG; the complex is required for localization of DSG3 and YAP1 to the cell membrane in keratinocytes. Interacts with SAMSN1. Interacts with RAF1, SSH1 and CRTC2/TORC2. Interacts with ABL1 (phosphorylated form); the interaction retains it in the cytoplasm. Interacts with GAB2. Interacts with MDM4 (phosphorylated); negatively regulates MDM4 activity toward TP53. Interacts with PKA-phosphorylated AANAT and SIRT2. Interacts with the 'Thr-369' phosphorylated form of DAPK2. Interacts with PI4KB, TBC1D22A and TBC1D22B. Interacts with SLITRK1. Interacts with LRRK2; this interaction is dependent on LRRK2 phosphorylation. Interacts with MARK2 and MARK3. Interacts with MEFV. Interacts with ENDOG, TSC2 and PIK3C3; interaction with ENDOG weakens its interaction with TSC2 and PIK3C3. Interacts with (phosphorylated) WDR24. Interacts with BEST1; this interaction promotes L-glutamate channel activity leading to the positive regulation of NMDA glutamate receptor activity through the L-glutamate secretion. Interacts with PKP1 (when phosphorylated); the interaction results in translocation of PKP1 to the cytoplasm and loss of intercellular adhesion in keratinocytes. Interacts with SPATA18/MIEAP (isoforms 1 and 2); a protein that also plays a role in MALM. Phosphorylated by various PKC isozymes. Highly expressed in brain, skeletal muscle, and heart.

It is found in the cytoplasm. The protein localises to the cytosol. Its subcellular location is the mitochondrion matrix. Adapter protein implicated in the regulation of a large spectrum of both general and specialized signaling pathways. Binds to a large number of partners, usually by recognition of a phosphoserine or phosphothreonine motif. Binding generally results in the modulation of the activity of the binding partner. Promotes inactivation of WDR24 component of the GATOR2 complex by binding to phosphorylated WDR24. Participates in the positive regulation of NMDA glutamate receptor activity by promoting the L-glutamate secretion through interaction with BEST1. Reduces keratinocyte intercellular adhesion, via interacting with PKP1 and sequestering it in the cytoplasm, thereby reducing its incorporation into desmosomes. Plays a role in mitochondrial protein catabolic process (also named MALM) that promotes the degradation of damaged proteins inside mitochondria. In Homo sapiens (Human), this protein is 14-3-3 protein gamma.